A 942-amino-acid chain; its full sequence is Mitogen-activated protein kinase kinase kinase 14 (942 aa).

The segment covering 136–152 (GKRHGKARKKRRKKRSK) has biased composition (basic residues). Disordered regions lie at residues 136 to 156 (GKRH…SLAQ) and 291 to 326 (VSGQ…SCPS). The 256-residue stretch at 402–657 (MTHQPRVGRG…ELRRKVGKAL (256 aa)) folds into the Protein kinase domain. The interaction with ZFP91 stretch occupies residues 403-655 (THQPRVGRGS…AMELRRKVGK (253 aa)). Residues 408–416 (VGRGSFGEV) and Lys431 contribute to the ATP site. The Proton acceptor role is filled by Asp517. Thr561 carries the phosphothreonine modification. Disordered regions lie at residues 660-756 (VGGL…FPDR) and 801-823 (SDDS…SSGV). Residues 707–720 (EPQPPLPPEPPEPS) are compositionally biased toward pro residues. Residues 809–823 (SKASQSSRDTLSSGV) show a composition bias toward polar residues.

The protein belongs to the protein kinase superfamily. STE Ser/Thr protein kinase family. MAP kinase kinase kinase subfamily. As to quaternary structure, interacts with TRAF2, TRAF3, TRAF5, TRAF6, IKKA and NF-kappa-B2/P100. Interacts with PELI3. Interacts with NIBP; the interaction is direct. Interacts with ARRB1 and ARRB2. Interacts with GRB10. Interacts with ZFP91. Interacts with NLRP12; this interaction promotes proteasomal degradation of MAP3K14. Directly interacts with DDX3X. Interacts (via C-terminus and kinase domain) with PPPC3A (via N-terminus) and PPP3CB. In terms of processing, phosphorylation at Thr-561 is required to activate its kinase activity and 'Lys-63'-linked polyubiquitination. Phosphorylated by CHUK/IKKA leading to MAP3K14 destabilization. Autophosphorylated. Ubiquitinated. Undergoes both 'Lys-48'- and 'Lys-63'-linked polyubiquitination. 'Lys-48'-linked polyubiquitination leads to its degradation by the proteasome, while 'Lys-63'-linked polyubiquitination stabilizes and activates it.

It is found in the cytoplasm. The enzyme catalyses L-seryl-[protein] + ATP = O-phospho-L-seryl-[protein] + ADP + H(+). It carries out the reaction L-threonyl-[protein] + ATP = O-phospho-L-threonyl-[protein] + ADP + H(+). Its function is as follows. Lymphotoxin beta-activated kinase which seems to be exclusively involved in the activation of NF-kappa-B and its transcriptional activity. Phosphorylates CHUK/IKKA. Promotes proteolytic processing of NFKB2/P100, which leads to activation of NF-kappa-B via the non-canonical pathway. Has an essential role in the non-canonical NF-kappa-B signalining that regulates genes encoding molecules involved in B-cell survival, lymphoid organogenesis, and immune response. Could act in a receptor-selective manner. The sequence is that of Mitogen-activated protein kinase kinase kinase 14 from Mus musculus (Mouse).